Reading from the N-terminus, the 79-residue chain is Putative membrane protein insertion efficiency factor (79 aa).

It belongs to the UPF0161 family.

The protein resides in the cell inner membrane. Its function is as follows. Could be involved in insertion of integral membrane proteins into the membrane. This is Putative membrane protein insertion efficiency factor from Thermotoga neapolitana (strain ATCC 49049 / DSM 4359 / NBRC 107923 / NS-E).